Consider the following 1627-residue polypeptide: Type III effector DspE (1627 aa).

Polar residues-rich tracts occupy residues 22–44 (AKTS…SLIQ) and 59–74 (GNGS…STTL). Disordered stretches follow at residues 22-102 (AKTS…GPIQ) and 436-464 (QTQA…TPGW). 3 short sequence motifs (wxxxE) span residues 464–468 (WNLSD), 514–520 (WEASSVE), and 660–667 (WQNAANHD).

Belongs to the AvrE family.

It localises to the secreted. It is found in the host cell. In terms of biological role, major virulence factor that may function as a water- and solute-permeable channel dedicated to creating osmotic/water potential perturbation and a water- and nutrient-rich apoplast in which bacteria multiply within the infected plant tissues. Its function is as follows. Required for plant cell death in N.benthamiana leaves and leaf cell death in S.tuberosum. Essential for pathogenicity. Does not suppress callose formation. The chain is Type III effector DspE from Pectobacterium carotovorum (Erwinia carotovora).